A 302-amino-acid chain; its full sequence is B3 domain-containing protein At3g17010 (302 aa).

Residues 21-116 (FFKIFQRADL…VFHVNIYEQN (96 aa)) constitute a DNA-binding region (TF-B3 1). The interval 123-192 (PRKFQTMGPS…KVKKKSKSKS (70 aa)) is disordered. Over residues 135 to 174 (IKKEEGENSLIDVKKEEESDESPGRAEFLVRKKKTEDSKS) the composition is skewed to basic and acidic residues. A compositionally biased stretch (basic residues) spans 175 to 192 (SKKKMTRNKVKKKSKSKS). The TF-B3 2 DNA-binding region spans 199 to 292 (VPEFKITIRK…EFVLLTSKKN (94 aa)).

Its subcellular location is the nucleus. This is B3 domain-containing protein At3g17010 from Arabidopsis thaliana (Mouse-ear cress).